A 204-amino-acid polypeptide reads, in one-letter code: RNA-free ribonuclease P (204 aa).

This sequence belongs to the HARP family.

The enzyme catalyses Endonucleolytic cleavage of RNA, removing 5'-extranucleotides from tRNA precursor.. RNA-free RNase P that catalyzes the removal of the 5'-leader sequence from pre-tRNA to produce the mature 5'-terminus. The polypeptide is RNA-free ribonuclease P (Pyrococcus abyssi (strain GE5 / Orsay)).